Reading from the N-terminus, the 280-residue chain is L-proline cis-4-hydroxylase (280 aa).

Residues His106, Asp108, and His154 each coordinate Fe cation. Arg164 serves as a coordination point for 2-oxoglutarate.

Belongs to the L-proline cis-4-/cis-3-hydroxylase family. It depends on Fe(2+) as a cofactor.

It carries out the reaction L-proline + 2-oxoglutarate + O2 = cis-4-hydroxy-L-proline + succinate + CO2. With respect to regulation, inhibited by metal ions such as Co(2+), Zn(2+), Cu(2+) or Ni(2+). Is also inhibited by EDTA or diethylpyrocarbonate (DEPC) in vitro. Unlike the procollagen-proline cis-3- and trans-4-hydroxylases from mammals, does not necessarily require L-ascorbate for activity although it does increase the activity of the enzyme. In terms of biological role, dioxygenase that catalyzes the 2-oxoglutarate-dependent selective hydroxylation of free L-proline to cis-4-hydroxy-L-proline (cis-4-Hyp). This Rhizobium meliloti (strain 1021) (Ensifer meliloti) protein is L-proline cis-4-hydroxylase.